The chain runs to 237 residues: Phosphoribosylaminoimidazole-succinocarboxamide synthase (237 aa).

It belongs to the SAICAR synthetase family.

The catalysed reaction is 5-amino-1-(5-phospho-D-ribosyl)imidazole-4-carboxylate + L-aspartate + ATP = (2S)-2-[5-amino-1-(5-phospho-beta-D-ribosyl)imidazole-4-carboxamido]succinate + ADP + phosphate + 2 H(+). It participates in purine metabolism; IMP biosynthesis via de novo pathway; 5-amino-1-(5-phospho-D-ribosyl)imidazole-4-carboxamide from 5-amino-1-(5-phospho-D-ribosyl)imidazole-4-carboxylate: step 1/2. The chain is Phosphoribosylaminoimidazole-succinocarboxamide synthase from Oceanobacillus iheyensis (strain DSM 14371 / CIP 107618 / JCM 11309 / KCTC 3954 / HTE831).